Consider the following 418-residue polypeptide: Putative competence-damage inducible protein (418 aa).

The protein belongs to the CinA family.

This is Putative competence-damage inducible protein from Clostridioides difficile (strain 630) (Peptoclostridium difficile).